The following is a 139-amino-acid chain: Ribulose bisphosphate carboxylase small subunit (139 aa).

This sequence belongs to the RuBisCO small chain family. Heterohexadecamer of 8 large and 8 small subunits.

It is found in the plastid. The protein resides in the chloroplast. Its function is as follows. RuBisCO catalyzes two reactions: the carboxylation of D-ribulose 1,5-bisphosphate, the primary event in carbon dioxide fixation, as well as the oxidative fragmentation of the pentose substrate in the photorespiration process. Both reactions occur simultaneously and in competition at the same active site. Although the small subunit is not catalytic it is essential for maximal activity. This Pylaiella littoralis (Seaweed) protein is Ribulose bisphosphate carboxylase small subunit.